The chain runs to 254 residues: Thiazole synthase (254 aa).

The active-site Schiff-base intermediate with DXP is the Lys95. 1-deoxy-D-xylulose 5-phosphate is bound by residues Gly156, 182 to 183, and 204 to 205; these read AG and NT.

The protein belongs to the ThiG family. As to quaternary structure, homotetramer. Forms heterodimers with either ThiH or ThiS.

It localises to the cytoplasm. It carries out the reaction [ThiS sulfur-carrier protein]-C-terminal-Gly-aminoethanethioate + 2-iminoacetate + 1-deoxy-D-xylulose 5-phosphate = [ThiS sulfur-carrier protein]-C-terminal Gly-Gly + 2-[(2R,5Z)-2-carboxy-4-methylthiazol-5(2H)-ylidene]ethyl phosphate + 2 H2O + H(+). The protein operates within cofactor biosynthesis; thiamine diphosphate biosynthesis. Its function is as follows. Catalyzes the rearrangement of 1-deoxy-D-xylulose 5-phosphate (DXP) to produce the thiazole phosphate moiety of thiamine. Sulfur is provided by the thiocarboxylate moiety of the carrier protein ThiS. In vitro, sulfur can be provided by H(2)S. The polypeptide is Thiazole synthase (Shewanella sediminis (strain HAW-EB3)).